The chain runs to 689 residues: Glycine--tRNA ligase beta subunit (689 aa).

It belongs to the class-II aminoacyl-tRNA synthetase family. As to quaternary structure, tetramer of two alpha and two beta subunits.

It is found in the cytoplasm. The catalysed reaction is tRNA(Gly) + glycine + ATP = glycyl-tRNA(Gly) + AMP + diphosphate. This is Glycine--tRNA ligase beta subunit from Escherichia coli O17:K52:H18 (strain UMN026 / ExPEC).